The following is a 337-amino-acid chain: uncharacterized protein (337 aa).

A run of 2 helical transmembrane segments spans residues 4–24 (FIFFFKNYCYISGSMLLFSLI) and 26–46 (LLLWIISLYCVGLVFWILFAL).

Belongs to the plectrovirus ORF2 family.

The protein resides in the host membrane. This is an uncharacterized protein from Spiroplasma melliferum (SpV1).